Here is a 347-residue protein sequence, read N- to C-terminus: Phenylalanine--tRNA ligase alpha subunit (347 aa).

Glu-265 contacts Mg(2+).

This sequence belongs to the class-II aminoacyl-tRNA synthetase family. Phe-tRNA synthetase alpha subunit type 1 subfamily. In terms of assembly, tetramer of two alpha and two beta subunits. Requires Mg(2+) as cofactor.

The protein localises to the cytoplasm. It carries out the reaction tRNA(Phe) + L-phenylalanine + ATP = L-phenylalanyl-tRNA(Phe) + AMP + diphosphate + H(+). The sequence is that of Phenylalanine--tRNA ligase alpha subunit from Mycolicibacterium vanbaalenii (strain DSM 7251 / JCM 13017 / BCRC 16820 / KCTC 9966 / NRRL B-24157 / PYR-1) (Mycobacterium vanbaalenii).